Here is a 145-residue protein sequence, read N- to C-terminus: MSLANQIDQFLGAIMQFAENKHEILLGECESNVKLTSTQEHILMILAAEVSTNARIAEQLKISPAAVTKALKKLQEQELIKSSRATNDERVVLWSLTEKAIPVAKEHAAHHEKTLSTYQELGDKFTDEEQKVISQFLSVLTEEFR.

The HTH marR-type domain occupies 1-142 (MSLANQIDQF…ISQFLSVLTE (142 aa)). 4 residues coordinate Zn(2+): glutamate 23, cysteine 29, glutamate 40, and histidine 41. Residues 53–76 (NARIAEQLKISPAAVTKALKKLQE) constitute a DNA-binding region (H-T-H motif). Glutamate 106, histidine 107, and histidine 111 together coordinate Zn(2+).

Homodimer.

With respect to regulation, zinc acts as a corepressor and is required for DNA-binding activity. Binds up to two zinc ligands per monomer. Inactive under zinc deprivation. In terms of biological role, zinc-responsive regulator that represses expression of the zit operon in the presence of zinc. Acts by binding two palindromic operator sites overlapping the -35 and -10 boxes of the zit promoter. Could be a sensitive sensor of intracellular zinc to efficiently respond to zinc variations in the environment. This Lactococcus lactis subsp. cremoris (strain MG1363) protein is Transcriptional regulator ZitR (zitR).